The sequence spans 251 residues: Putative F-box protein L166 (251 aa).

The F-box domain occupies 1–46 (MDNICELFDEILPLIIEYLSDHDKVKFMTTCSRLYYFIDKVYYENI). Residues 188–251 (PEPESQENFR…RPKSFMKYRR (64 aa)) are disordered. Residues 202 to 217 (TESNNNKPVNKSQPQI) show a composition bias toward polar residues. Residues 241–251 (KRPKSFMKYRR) show a composition bias toward basic residues.

This is Putative F-box protein L166 from Acanthamoeba polyphaga (Amoeba).